The following is a 416-amino-acid chain: Phosphoribosylamine--glycine ligase (416 aa).

The 207-residue stretch at K107 to D313 folds into the ATP-grasp domain. L133–S194 lines the ATP pocket. The Mg(2+) site is built by E283 and N285.

The protein belongs to the GARS family. Mg(2+) serves as cofactor. The cofactor is Mn(2+).

The enzyme catalyses 5-phospho-beta-D-ribosylamine + glycine + ATP = N(1)-(5-phospho-beta-D-ribosyl)glycinamide + ADP + phosphate + H(+). Its pathway is purine metabolism; IMP biosynthesis via de novo pathway; N(1)-(5-phospho-D-ribosyl)glycinamide from 5-phospho-alpha-D-ribose 1-diphosphate: step 2/2. This Clostridium acetobutylicum (strain ATCC 824 / DSM 792 / JCM 1419 / IAM 19013 / LMG 5710 / NBRC 13948 / NRRL B-527 / VKM B-1787 / 2291 / W) protein is Phosphoribosylamine--glycine ligase.